The sequence spans 156 residues: Cell division protein SepF (156 aa).

It belongs to the SepF family. In terms of assembly, homodimer. Interacts with FtsZ.

It localises to the cytoplasm. In terms of biological role, cell division protein that is part of the divisome complex and is recruited early to the Z-ring. Probably stimulates Z-ring formation, perhaps through the cross-linking of FtsZ protofilaments. Its function overlaps with FtsA. This chain is Cell division protein SepF, found in Ruminiclostridium cellulolyticum (strain ATCC 35319 / DSM 5812 / JCM 6584 / H10) (Clostridium cellulolyticum).